Consider the following 288-residue polypeptide: Bifunctional protein FolD (288 aa).

An NADP(+)-binding site is contributed by 166–168 (GRS).

This sequence belongs to the tetrahydrofolate dehydrogenase/cyclohydrolase family. As to quaternary structure, homodimer.

The catalysed reaction is (6R)-5,10-methylene-5,6,7,8-tetrahydrofolate + NADP(+) = (6R)-5,10-methenyltetrahydrofolate + NADPH. It catalyses the reaction (6R)-5,10-methenyltetrahydrofolate + H2O = (6R)-10-formyltetrahydrofolate + H(+). Its pathway is one-carbon metabolism; tetrahydrofolate interconversion. Catalyzes the oxidation of 5,10-methylenetetrahydrofolate to 5,10-methenyltetrahydrofolate and then the hydrolysis of 5,10-methenyltetrahydrofolate to 10-formyltetrahydrofolate. This is Bifunctional protein FolD from Levilactobacillus brevis (strain ATCC 367 / BCRC 12310 / CIP 105137 / JCM 1170 / LMG 11437 / NCIMB 947 / NCTC 947) (Lactobacillus brevis).